Consider the following 553-residue polypeptide: Chaperonin GroEL (553 aa).

ATP-binding positions include 30–33, Lys51, 87–91, Gly415, and Asp495; these read TLGP and DGTTT.

The protein belongs to the chaperonin (HSP60) family. In terms of assembly, forms a cylinder of 14 subunits composed of two heptameric rings stacked back-to-back. Interacts with the co-chaperonin GroES.

The protein resides in the cytoplasm. It catalyses the reaction ATP + H2O + a folded polypeptide = ADP + phosphate + an unfolded polypeptide.. Together with its co-chaperonin GroES, plays an essential role in assisting protein folding. The GroEL-GroES system forms a nano-cage that allows encapsulation of the non-native substrate proteins and provides a physical environment optimized to promote and accelerate protein folding. This chain is Chaperonin GroEL, found in Buchnera aphidicola subsp. Tuberolachnus salignus.